A 479-amino-acid polypeptide reads, in one-letter code: Glycogen synthase (479 aa).

ADP-alpha-D-glucose is bound at residue lysine 15.

This sequence belongs to the glycosyltransferase 1 family. Bacterial/plant glycogen synthase subfamily.

It carries out the reaction [(1-&gt;4)-alpha-D-glucosyl](n) + ADP-alpha-D-glucose = [(1-&gt;4)-alpha-D-glucosyl](n+1) + ADP + H(+). It functions in the pathway glycan biosynthesis; glycogen biosynthesis. Functionally, synthesizes alpha-1,4-glucan chains using ADP-glucose. This is Glycogen synthase from Histophilus somni (strain 129Pt) (Haemophilus somnus).